A 248-amino-acid chain; its full sequence is Endonuclease V (248 aa).

2 residues coordinate Mg(2+): aspartate 54 and aspartate 118.

Belongs to the endonuclease V family. Mg(2+) serves as cofactor.

The protein resides in the cytoplasm. The enzyme catalyses Endonucleolytic cleavage at apurinic or apyrimidinic sites to products with a 5'-phosphate.. In terms of biological role, DNA repair enzyme involved in the repair of deaminated bases. Selectively cleaves double-stranded DNA at the second phosphodiester bond 3' to a deoxyinosine leaving behind the intact lesion on the nicked DNA. In Natronomonas pharaonis (strain ATCC 35678 / DSM 2160 / CIP 103997 / JCM 8858 / NBRC 14720 / NCIMB 2260 / Gabara) (Halobacterium pharaonis), this protein is Endonuclease V.